Reading from the N-terminus, the 81-residue chain is Photosystem I iron-sulfur center (81 aa).

4Fe-4S ferredoxin-type domains are found at residues 2 to 31 and 39 to 68; these read SHSVKIYDTCIGCTQCVRACPTDVLEMIPW and IAPAPRTEDCVGCKRCESACPTDFLSVRVY. C11, C14, C17, C21, C48, C51, C54, and C58 together coordinate [4Fe-4S] cluster.

In terms of assembly, the eukaryotic PSI reaction center is composed of at least 11 subunits. [4Fe-4S] cluster is required as a cofactor.

It is found in the plastid. The protein resides in the chloroplast thylakoid membrane. It carries out the reaction reduced [plastocyanin] + hnu + oxidized [2Fe-2S]-[ferredoxin] = oxidized [plastocyanin] + reduced [2Fe-2S]-[ferredoxin]. Functionally, apoprotein for the two 4Fe-4S centers FA and FB of photosystem I (PSI); essential for photochemical activity. FB is the terminal electron acceptor of PSI, donating electrons to ferredoxin. The C-terminus interacts with PsaA/B/D and helps assemble the protein into the PSI complex. Required for binding of PsaD and PsaE to PSI. PSI is a plastocyanin-ferredoxin oxidoreductase, converting photonic excitation into a charge separation, which transfers an electron from the donor P700 chlorophyll pair to the spectroscopically characterized acceptors A0, A1, FX, FA and FB in turn. The sequence is that of Photosystem I iron-sulfur center from Liriodendron tulipifera (Tuliptree).